The following is a 145-amino-acid chain: 3-hydroxyacyl-[acyl-carrier-protein] dehydratase FabZ (145 aa).

The active site involves H49.

It belongs to the thioester dehydratase family. FabZ subfamily.

The protein resides in the cytoplasm. It catalyses the reaction a (3R)-hydroxyacyl-[ACP] = a (2E)-enoyl-[ACP] + H2O. In terms of biological role, involved in unsaturated fatty acids biosynthesis. Catalyzes the dehydration of short chain beta-hydroxyacyl-ACPs and long chain saturated and unsaturated beta-hydroxyacyl-ACPs. The polypeptide is 3-hydroxyacyl-[acyl-carrier-protein] dehydratase FabZ (Rickettsia peacockii (strain Rustic)).